We begin with the raw amino-acid sequence, 372 residues long: Alpha-parvin (372 aa).

Low complexity predominate over residues 1–11 (MATSPQKSPSV). Positions 1–44 (MATSPQKSPSVPKSPTPKSPPSRKKDDSFLGKLGGTLARRKKAK) are disordered. Ala-2 is subject to N-acetylalanine. Phosphoserine occurs at positions 8, 14, and 19. The interaction with ARHGAP31 stretch occupies residues 21 to 25 (PSRKK). 2 positions are modified to phosphoserine: Ser-28 and Ser-62. 2 Calponin-homology (CH) domains span residues 95–202 (QELM…QYFR) and 262–369 (NVVK…TKYR). Positions 223-372 (GILQSRQIQE…NLFTKYRNVE (150 aa)) are required for interaction with TESK1 and ILK.

The protein belongs to the parvin family. As to quaternary structure, component of the heterotrimeric IPP (ILK-PINCH-PARVIN) complex composed of ILK, LIMS1/PINCH and PARVA; the complex binds to F-actin via the C-terminal tail of LIMS1 and the N-terminal region of PARVA, promoting F-actin filament bundling. Interacts with TGFB1I1. Interacts with ARHGAP31. Interacts with the actin cytoskeleton. Interacts (via C-terminus) with TESK1 (via C-terminus); the interaction inhibits TESK1 kinase activity. Interacts with PXN/PAXILLIN (via LD motif 4). As to expression, widely expressed.

It localises to the cell junction. The protein localises to the focal adhesion. Its subcellular location is the cell membrane. The protein resides in the cytoplasm. It is found in the cytoskeleton. It localises to the myofibril. The protein localises to the sarcomere. Its subcellular location is the z line. Functionally, plays a role in sarcomere organization and in smooth muscle cell contraction. Required for normal development of the embryonic cardiovascular system, and for normal septation of the heart outflow tract. Plays a role in sprouting angiogenesis and is required for normal adhesion of vascular smooth muscle cells to endothelial cells during blood vessel development. Plays a role in the reorganization of the actin cytoskeleton, formation of lamellipodia and ciliogenesis. Plays a role in the establishment of cell polarity, cell adhesion, cell spreading, and directed cell migration. Within the IPP (ILK-PINCH-PARVIN) complex, binds to F-actin, promoting F-actin bundling, a process required to generate force for actin cytoskeleton reorganization and subsequent dynamic cell adhesion events such as cell spreading and migration. This Rattus norvegicus (Rat) protein is Alpha-parvin (Parva).